The following is a 431-amino-acid chain: Divalent metal cation transporter MntH (431 aa).

12 consecutive transmembrane segments (helical) span residues Trp-30 to Gly-50, Gly-63 to Leu-83, Pro-106 to Glu-126, Leu-137 to Leu-159, Ile-169 to Ser-189, Tyr-209 to Leu-229, Val-257 to Ala-277, Val-287 to Ser-307, Val-309 to Gly-329, Ile-341 to Gly-361, Ala-367 to Leu-387, and Val-405 to Phe-425.

Belongs to the NRAMP family.

It localises to the cell inner membrane. In terms of biological role, h(+)-stimulated, divalent metal cation uptake system. The chain is Divalent metal cation transporter MntH from Chromohalobacter salexigens (strain ATCC BAA-138 / DSM 3043 / CIP 106854 / NCIMB 13768 / 1H11).